The primary structure comprises 105 residues: UPF0148 protein PYRAB12700 (105 aa).

Belongs to the UPF0148 family.

The polypeptide is UPF0148 protein PYRAB12700 (Pyrococcus abyssi (strain GE5 / Orsay)).